Consider the following 628-residue polypeptide: Rac GTPase-activating protein 1 (628 aa).

At Met-1 the chain carries N-acetylmethionine. Residues 33–110 (QVVKDFEDFR…IQLIRDILMC (78 aa)) adopt a coiled-coil conformation. An interaction with SLC26A8 region spans residues 107–286 (ILMCDTSGSI…GTPQNTGGMR (180 aa)). A Phosphoserine; by PLK1 modification is found at Ser-150. Ser-155 is subject to Phosphoserine. Position 158 is a phosphoserine; by PLK1 (Ser-158). Residue Thr-162 is modified to Phosphothreonine. A phosphoserine; by PLK1 mark is found at Ser-165 and Ser-171. Residues 179–201 (KKREKRRSNSRQFIDGPPGPVKK) are disordered. 3 positions are modified to phosphoserine: Ser-204, Ser-207, and Ser-215. Residues 242–284 (SWTRSRGKSGPLQPVNSDSALNSRPLEPRTDTDNLGTPQNTGG) are disordered. Lys-249 is covalently cross-linked (Glycyl lysine isopeptide (Lys-Gly) (interchain with G-Cter in SUMO2)). Ser-258 bears the Phosphoserine mark. The segment covering 274 to 283 (DNLGTPQNTG) has biased composition (polar residues). A Phorbol-ester/DAG-type zinc finger spans residues 287–336 (LHDFVSKTVIKPESCVPCGKRIKFGKLSLKCRDCRLVSHPECRDRCPLPC). Thr-343 is modified (phosphothreonine). The 191-residue stretch at 350 to 540 (GMLADFVSQA…RLLSLPLEYW (191 aa)) folds into the Rho-GAP domain. Ser-388 bears the Phosphoserine; by AURKB mark. Lys-405 participates in a covalent cross-link: Glycyl lysine isopeptide (Lys-Gly) (interchain with G-Cter in SUMO2). Residue Ser-411 is modified to Phosphoserine; by AURKB. Phosphothreonine is present on residues Thr-564, Thr-577, Thr-585, and Thr-602.

Heterotetramer of two molecules each of RACGAP1 and KIF23. Found in the centralspindlin complex. Associates with alpha-, beta- and gamma-tubulin and microtubules. Interacts via its Rho-GAP domain with RND2. Associates with AURKB during M phase. Interacts via its Rho-GAP domain and basic region with PRC1. The interaction with PRC1 inhibits its GAP activity towards CDC42 in vitro, which may be required for maintaining normal spindle morphology. Interacts with SLC26A8 via its N-terminus. Interacts with ECT2; the interaction is direct, occurs at anaphase and during cytokinesis in a microtubule-dependent manner, is enhanced by phosphorylation by PLK1 and phosphorylation at Ser-165 plays a major role in mediating binding. Interacts with RAB11FIP3; the interaction occurs at late telophase. Interacts with KIF23; the interaction is direct. In terms of processing, phosphorylated at multiple sites in the midbody during cytokinesis. Phosphorylation by AURKB on Ser-388 at the midbody is, at least in part, responsible for exerting its latent GAP activity towards RhoA. Phosphorylation on multiple serine residues by PLK1 enhances its association with ECT2 and is critical for cleavage furrow formation. Phosphorylation on Ser-165 plays a major role in mediating interaction with ECT2. Phosphorylation on Ser-158 does not appear to contribute to binding to ECT2. In terms of tissue distribution, highly expressed in testis, thymus and spleen and weakly expressed in brain, heart, skeletal muscle and kidney. In testis, expression is restricted to germ cells with the highest levels of expression found in spermatocytes. Not detected in adult liver. Also expressed in fetal liver and in several hematopoietic cell lines.

It localises to the nucleus. The protein localises to the cytoplasm. It is found in the cytoskeleton. The protein resides in the spindle. Its subcellular location is the cytoplasmic vesicle. It localises to the secretory vesicle. The protein localises to the acrosome. It is found in the cleavage furrow. The protein resides in the midbody. Its subcellular location is the midbody ring. It localises to the cell membrane. Its function is as follows. Component of the centralspindlin complex that serves as a microtubule-dependent and Rho-mediated signaling required for the myosin contractile ring formation during the cell cycle cytokinesis. Required for proper attachment of the midbody to the cell membrane during cytokinesis. Sequentially binds to ECT2 and RAB11FIP3 which regulates cleavage furrow ingression and abscission during cytokinesis. Plays key roles in controlling cell growth and differentiation of hematopoietic cells through mechanisms other than regulating Rac GTPase activity. Has a critical role in erythropoiesis. Also involved in the regulation of growth-related processes in adipocytes and myoblasts. May be involved in regulating spermatogenesis and in the RACGAP1 pathway in neuronal proliferation. Shows strong GAP (GTPase activation) activity towards CDC42 and RAC1 and less towards RHOA. Essential for the early stages of embryogenesis. May play a role in regulating cortical activity through RHOA during cytokinesis. May participate in the regulation of sulfate transport in male germ cells. This Mus musculus (Mouse) protein is Rac GTPase-activating protein 1.